The primary structure comprises 78 residues: Beta-defensin 105A (78 aa).

Residues 1–27 form the signal peptide; that stretch reads MALIRKTFYFLFAVFFILVQLPSGCQA. Cystine bridges form between cysteine 43/cysteine 74, cysteine 53/cysteine 67, and cysteine 57/cysteine 73.

This sequence belongs to the beta-defensin family.

The protein resides in the secreted. In terms of biological role, has antimicrobial activity. The sequence is that of Beta-defensin 105A (DEFB105A) from Gorilla gorilla gorilla (Western lowland gorilla).